The chain runs to 206 residues: MELRAYTVLDALQPQLVAFLQTVSTGFMPMEQQASVLVEIAPGIAVNQLTDAALKATRCQPGLQIVERAYGLIEMHDDDQGQVRAAGDAMLAHLGAREADRLAPRVVSSQIITGIDGHQSQLINRMRHGDMIQAGQTLYILEVHPAGYAALAANEAEKAAPIKLLEVVTFGAFGRLWLGGGEAEIAEAARAAEGALAGLSGRDNRG.

BMC circularly permuted domains lie at 2–104 and 105–206; these read ELRA…RLAP and RVVS…DNRG. Residues 67-68 carry the Pore gating residues motif; sequence ER.

It belongs to the EutL/PduB family. Homotrimerizes to form a pseudohexamer. These stack, with the concave faces together, with the concave faces together, in purified bacterial microcompartments (BMC).

The protein localises to the bacterial microcompartment. Its function is as follows. A minor component of the bacterial microcompartment (BMC) shell. Expression of 5 proteins in E.coli (BMC-H (Hoch_5815), BMC-P (Hoch_5814), and 3 BMC-T (Hoch_5812, Hoch_5816, Hoch_3341)) forms 40 nm artificial BMCs with a molecular mass of 6.5 MDa. One of 2 stacked pseudohexamers in the BMC. There are 20 BMC-T pseudohexamers per BMC, composed of mixed BMC-T1, BMC-T2 and BMC-T3. The shell facets are 20-30 Angstroms thick, with 1 of the stacked BMC-T trimers protruding to the exterior. The stacked trimers may serve as conduits to allow metabolite flux across the protein shell, gated by Arg-68 which contacts Glu-67 in an adjacent subunit; they are flexible enough to play a role in accommodating variations in shell assembly. This Haliangium ochraceum (strain DSM 14365 / JCM 11303 / SMP-2) protein is Bacterial microcompartment protein trimer-3.